Here is a 410-residue protein sequence, read N- to C-terminus: Serine hydroxymethyltransferase (410 aa).

(6S)-5,6,7,8-tetrahydrofolate-binding positions include leucine 119 and 123–125; that span reads GHL. An N6-(pyridoxal phosphate)lysine modification is found at lysine 228. 351-353 contributes to the (6S)-5,6,7,8-tetrahydrofolate binding site; it reads SPF.

This sequence belongs to the SHMT family. Homodimer. The cofactor is pyridoxal 5'-phosphate.

The protein localises to the cytoplasm. It carries out the reaction (6R)-5,10-methylene-5,6,7,8-tetrahydrofolate + glycine + H2O = (6S)-5,6,7,8-tetrahydrofolate + L-serine. Its pathway is one-carbon metabolism; tetrahydrofolate interconversion. The protein operates within amino-acid biosynthesis; glycine biosynthesis; glycine from L-serine: step 1/1. Catalyzes the reversible interconversion of serine and glycine with tetrahydrofolate (THF) serving as the one-carbon carrier. This reaction serves as the major source of one-carbon groups required for the biosynthesis of purines, thymidylate, methionine, and other important biomolecules. Also exhibits THF-independent aldolase activity toward beta-hydroxyamino acids, producing glycine and aldehydes, via a retro-aldol mechanism. In Alkaliphilus metalliredigens (strain QYMF), this protein is Serine hydroxymethyltransferase.